A 307-amino-acid polypeptide reads, in one-letter code: Cyclin-dependent kinase 5 activator 1 (307 aa).

A lipid anchor (N-myristoyl glycine) is attached at G2. S8 carries the post-translational modification Phosphoserine; by CDK5. Positions 97-133 are disordered; sequence TFAQPPPAQPPAPPASQLSGSQTGVSSSVKKAPHPAI. Over residues 100 to 110 the composition is skewed to pro residues; that stretch reads QPPPAQPPAPP. Residues 112-125 show a composition bias toward polar residues; it reads SQLSGSQTGVSSSV. T138 carries the phosphothreonine; by CDK5 modification.

The protein belongs to the cyclin-dependent kinase 5 activator family. Heterodimer composed of a catalytic subunit CDK5 and a regulatory subunit CDK5R1 (p25) and macromolecular complex composed of at least CDK5, CDK5R1 (p35) and CDK5RAP1 or CDK5RAP2 or CDK5RAP3. Only the heterodimer shows kinase activity. Interacts with EPHA4 and NGEF; may mediate the activation of NGEF by EPHA4. Interacts with RASGRF2. The complex p35/CDK5 interacts with CLOCK. In terms of processing, the p35 form is proteolytically cleaved by calpain, giving rise to the p25 form. P35 has a 5 to 10 fold shorter half-life compared to p25. The conversion results in deregulation of the CDK5 kinase: p25/CDK5 kinase displays an increased and altered tau phosphorylation in comparison to the p35/CDK5 kinase in vivo. Post-translationally, myristoylated. A proper myristoylation signal is essential for the proper distribution of p35. Phosphorylation at Ser-8 and Thr-138 by CDK5 prevents calpain-mediated proteolysis. In terms of processing, ubiquitinated, leading to its degradation: degradation of p35 by proteasome results in down-regulation of CDK5 activity. During this process, CDK5 phosphorylates p35 and induces its ubiquitination and subsequent degradation. Ubiquitinated by the CRL2(FEM1B) complex, which recognizes the -Gly-Leu-Asp-Arg C-degron at the C-terminus, leading to its degradation. In terms of tissue distribution, brain and neuron specific.

The protein localises to the cell membrane. It localises to the cell projection. It is found in the neuron projection. The protein resides in the nucleus. Its subcellular location is the cytoplasm. The protein localises to the perinuclear region. It localises to the perikaryon. In terms of biological role, p35 is a neuron specific activator of CDK5. The complex p35/CDK5 is required for neurite outgrowth and cortical lamination. Involved in dendritic spine morphogenesis by mediating the EFNA1-EPHA4 signaling. Activator of TPKII. The complex p35/CDK5 participates in the regulation of the circadian clock by modulating the function of CLOCK protein: phosphorylates CLOCK at 'Thr-451' and 'Thr-461' and regulates the transcriptional activity of the CLOCK-BMAL1 heterodimer in association with altered stability and subcellular distribution. The protein is Cyclin-dependent kinase 5 activator 1 (Cdk5r1) of Rattus norvegicus (Rat).